The following is a 295-amino-acid chain: Very long chain fatty acid elongase 5 (295 aa).

7 helical membrane passes run 26-46 (WLLLDNYVPTIFFTALYLFIV), 64-84 (ILVVYNLGLTLLSFYMFYELV), 112-132 (VLWWYYFSKLIEFMDTFFFIL), 150-170 (MLNIWWFVMNWVPCGHSFFGA), 172-192 (LNSFIHVLMYSYYGLSAIPAI), 207-223 (LTQFVLTMTQTTCAMIW), and 227-247 (FPMGWLYFQNSYMISLIILFT). Residues 265–295 (YQNGSASAVNGYTNSFSSLEDNVKQRKQRQN) form a disordered region. Residues 266-284 (QNGSASAVNGYTNSFSSLE) are compositionally biased toward polar residues.

The protein belongs to the ELO family. ELOVL5 subfamily.

It is found in the endoplasmic reticulum membrane. It localises to the cell projection. Its subcellular location is the dendrite. It catalyses the reaction a very-long-chain acyl-CoA + malonyl-CoA + H(+) = a very-long-chain 3-oxoacyl-CoA + CO2 + CoA. The enzyme catalyses (6Z,9Z,12Z)-octadecatrienoyl-CoA + malonyl-CoA + H(+) = (8Z,11Z,14Z)-3-oxoeicosatrienoyl-CoA + CO2 + CoA. The catalysed reaction is (9Z,12Z,15Z)-octadecatrienoyl-CoA + malonyl-CoA + H(+) = (11Z,14Z,17Z)-3-oxoeicosatrienoyl-CoA + CO2 + CoA. It carries out the reaction (9Z)-hexadecenoyl-CoA + malonyl-CoA + H(+) = 3-oxo-(11Z)-octadecenoyl-CoA + CO2 + CoA. It catalyses the reaction (9Z)-octadecenoyl-CoA + malonyl-CoA + H(+) = 3-oxo-(11Z)-eicosenoyl-CoA + CO2 + CoA. The enzyme catalyses (11Z)-octadecenoyl-CoA + malonyl-CoA + H(+) = 3-oxo-(13Z)-eicosenoyl-CoA + CO2 + CoA. The catalysed reaction is (9Z,12Z)-octadecadienoyl-CoA + malonyl-CoA + H(+) = (11Z,14Z)-3-oxoicosa-11,14-dienoyl-CoA + CO2 + CoA. It carries out the reaction (6Z,9Z,12Z,15Z)-octadecatetraenoyl-CoA + malonyl-CoA + H(+) = (8Z,11Z,14Z,17Z)-3-oxoicosatetraenoyl-CoA + CO2 + CoA. It catalyses the reaction (5Z,8Z,11Z,14Z)-eicosatetraenoyl-CoA + malonyl-CoA + H(+) = (7Z,10Z,13Z,16Z)-3-oxodocosatetraenoyl-CoA + CO2 + CoA. The enzyme catalyses (5Z,8Z,11Z,14Z,17Z)-eicosapentaenoyl-CoA + malonyl-CoA + H(+) = 3-oxo-(7Z,10Z,13Z,16Z,19Z)-docosapentaenoyl-CoA + CO2 + CoA. It functions in the pathway lipid metabolism; polyunsaturated fatty acid biosynthesis. In terms of biological role, catalyzes the first and rate-limiting reaction of the four reactions that constitute the long-chain fatty acids elongation cycle. This endoplasmic reticulum-bound enzymatic process allows the addition of 2 carbons to the chain of long- and very long-chain fatty acids (VLCFAs) per cycle. Condensing enzyme that acts specifically toward polyunsaturated acyl-CoA with the higher activity toward C18:3(n-6) acyl-CoA. May participate in the production of monounsaturated and of polyunsaturated VLCFAs of different chain lengths that are involved in multiple biological processes as precursors of membrane lipids and lipid mediators. In conditions where the essential linoleic and alpha linoleic fatty acids are lacking it is also involved in the synthesis of Mead acid from oleic acid. In Xenopus laevis (African clawed frog), this protein is Very long chain fatty acid elongase 5.